The chain runs to 193 residues: Copper-binding lipoprotein NosL (193 aa).

Positions Met1–Ala19 are cleaved as a signal peptide. Cys20 carries N-palmitoyl cysteine lipidation. Cys20 carries the S-diacylglycerol cysteine lipid modification.

Belongs to the NosL family. Monomer. Apo-NosL can form homodimers.

Its subcellular location is the cell membrane. Functionally, may act as a metallochaperone involved in nitrous oxide reductase assembly. Specifically binds Cu(+). The protein is Copper-binding lipoprotein NosL of Achromobacter cycloclastes.